A 100-amino-acid chain; its full sequence is MTVSNTVDQYTVLSGDRSKIKDLLCNRLTECGWRDEVRLLCRTILLEKGTGNSFTVEQLITEVTPKARTLVPDAVKKELLMKIRTILTENESEIEDAEEP.

The protein belongs to the ENY2 family. Component of the nuclear pore complex (NPC)-associated AMEX complex (anchoring and mRNA export complex), composed of at least e(y)2 and xmas-2. Component of the SAGA transcription coactivator-HAT complexes, at least composed of Ada2b, e(y)2, Pcaf/Gcn5, Taf10 and Nipped-A/Trrap. Within the SAGA complex, e(y)2, Sgf11, and not/nonstop form an additional subcomplex of SAGA called the DUB module (deubiquitination module). Component of the THO complex, composed of at least e(y)2, HPR1, THO2, THOC5, THOC6 and THOC7. Interacts with e(y)1. Interacts with su(Hw) (via zinc fingers). Interacts with xmas-2; required for localization to the nuclear periphery. Interacts with the nuclear pore complex (NPC).

The protein localises to the nucleus. Its subcellular location is the nucleoplasm. It localises to the cytoplasm. Functionally, involved in mRNA export coupled transcription activation by association with both the AMEX and the SAGA complexes. The SAGA complex is a multiprotein complex that activates transcription by remodeling chromatin and mediating histone acetylation and deubiquitination. Within the SAGA complex, participates in a subcomplex that specifically deubiquitinates histone H2B. The SAGA complex is recruited to specific gene promoters by activators, where it is required for transcription. Required for nuclear receptor-mediated transactivation. Involved in transcription elongation by recruiting the THO complex onto nascent mRNA. The AMEX complex functions in docking export-competent ribonucleoprotein particles (mRNPs) to the nuclear entrance of the nuclear pore complex (nuclear basket). AMEX participates in mRNA export and accurate chromatin positioning in the nucleus by tethering genes to the nuclear periphery. The chain is Enhancer of yellow 2 transcription factor from Drosophila ananassae (Fruit fly).